A 664-amino-acid polypeptide reads, in one-letter code: UvrABC system protein B (664 aa).

The 158-residue stretch at 25–182 folds into the Helicase ATP-binding domain; the sequence is KSFGEGKNKI…RKFLHIQYAR (158 aa). 38–45 contributes to the ATP binding site; it reads GVTGSGKT. The short motif at 91-114 is the Beta-hairpin element; the sequence is YYDYYQPEAYVPSSDTFIEKDMSM. A Helicase C-terminal domain is found at 429–595; the sequence is QIEDLLNEIR…TIQKEIHDIL (167 aa). The UVR domain maps to 625–660; that stretch reads DKLREALKREMLRYANDMDFEKAAMFRDKMLALGPD.

This sequence belongs to the UvrB family. In terms of assembly, forms a heterotetramer with UvrA during the search for lesions. Interacts with UvrC in an incision complex.

It is found in the cytoplasm. In terms of biological role, the UvrABC repair system catalyzes the recognition and processing of DNA lesions. A damage recognition complex composed of 2 UvrA and 2 UvrB subunits scans DNA for abnormalities. Upon binding of the UvrA(2)B(2) complex to a putative damaged site, the DNA wraps around one UvrB monomer. DNA wrap is dependent on ATP binding by UvrB and probably causes local melting of the DNA helix, facilitating insertion of UvrB beta-hairpin between the DNA strands. Then UvrB probes one DNA strand for the presence of a lesion. If a lesion is found the UvrA subunits dissociate and the UvrB-DNA preincision complex is formed. This complex is subsequently bound by UvrC and the second UvrB is released. If no lesion is found, the DNA wraps around the other UvrB subunit that will check the other stand for damage. This Leptospira biflexa serovar Patoc (strain Patoc 1 / Ames) protein is UvrABC system protein B.